A 256-amino-acid chain; its full sequence is MNNAIFPNKFKAALAAQQVQIGCWSALASPITTEVLGLAGFDWLVLDGEHAPNDVTTLIPQLMALKGSASAPVVRVPTNEPVIIKRMLDIGFYNFLIPFVETQEEAARAVASTRYPPEGIRGVSVSHRANMFGTVPDYFAQSNKNITIIVQIESQLGVDNVDAIAATEGVDGIFVGPSDLAAALGHLGNASHPDVQQTIQHIFARAKAHGKPCGILAPVEADARRYLEWGATFVAVGSDLGAFRASTQKLADTFKK.

His-50 acts as the Proton acceptor in catalysis. Gln-151 is a substrate binding site. Glu-153 lines the Mg(2+) pocket. Residues Ser-178 and Asp-179 each coordinate substrate. Asp-179 contacts Mg(2+).

The protein belongs to the HpcH/HpaI aldolase family. KDGluc aldolase subfamily. As to quaternary structure, homohexamer; trimer of dimers. Mg(2+) is required as a cofactor.

It carries out the reaction 5-dehydro-4-deoxy-D-glucarate = 2-hydroxy-3-oxopropanoate + pyruvate. The enzyme catalyses 2-dehydro-3-deoxy-D-glucarate = 2-hydroxy-3-oxopropanoate + pyruvate. Its pathway is carbohydrate acid metabolism; galactarate degradation; D-glycerate from galactarate: step 2/3. In terms of biological role, catalyzes the reversible retro-aldol cleavage of both 5-keto-4-deoxy-D-glucarate and 2-keto-3-deoxy-D-glucarate to pyruvate and tartronic semialdehyde. This chain is 5-keto-4-deoxy-D-glucarate aldolase, found in Salmonella agona (strain SL483).